The primary structure comprises 703 residues: Antigen peptide transporter 2 (703 aa).

Over 1 to 6 the chain is Lumenal; that stretch reads MALSHP. The chain crosses the membrane as a helical span at residues 7-27; sequence RPWASLLLVDLALLGLLQSSL. Residues 28 to 56 are Cytoplasmic-facing; it reads GTLLPPGLPGLWLEGTLRLGVLWGLLKVG. A helical membrane pass occupies residues 57-77; the sequence is GLLRLVGTFLPLLCLTNPLFF. Residues 78–98 are Lumenal-facing; the sequence is SLRALVGSTMSTSVVRVASAS. The chain crosses the membrane as a helical span at residues 99-119; that stretch reads WGWLLADYGAVALSLAVWAVL. The Cytoplasmic segment spans residues 120 to 148; that stretch reads SPAGAQEKEPGQENNRALMIRLLRLSKPD. A helical membrane pass occupies residues 149 to 169; sequence LPFLIVAFIFLAMAVWWEMFI. The ABC transmembrane type-1 domain maps to 152-435; that stretch reads LIVAFIFLAM…LVYMYGDMLS (284 aa). At 170-187 the chain is on the lumenal side; that stretch reads PHYSGRVIDILGGDFDPD. Residues 188–208 traverse the membrane as a helical segment; it reads AFASAIFFMCLFSVGSSLSAG. At 209-266 the chain is on the cytoplasmic side; it reads CRGGSFLFAESRINLRIREQLFSSLLRQDLAFFQETKTGELNSRLSSDTSLMSQWLSL. Residues 267–287 traverse the membrane as a helical segment; it reads NANILLRSLVKVVGLYYFMLQ. Residues 288–293 are Lumenal-facing; it reads VSPRLT. Residues 294–314 traverse the membrane as a helical segment; the sequence is FLSLLDLPLTIAAEKVYNPRH. The part of the peptide-binding site stretch occupies residues 301–389; that stretch reads PLTIAAEKVY…QRVMALGMQV (89 aa). Residues 315-374 lie on the Cytoplasmic side of the membrane; the sequence is QAVLKEIQDAVAKAGQVVREAVGGLQTVRSFGAEEQEVRRYKEALERCRQLWWRRDLEKS. Residues 375-395 form a helical membrane-spanning segment; the sequence is LYLVIQRVMALGMQVLILNVG. At 396–408 the chain is on the lumenal side; that stretch reads VQQILAGEVTRGG. A helical membrane pass occupies residues 409 to 429; it reads LLSFLLYQEEVGHHVQNLVYM. The part of the peptide-binding site stretch occupies residues 414–433; the sequence is LYQEEVGHHVQNLVYMYGDM. Over 430 to 703 the chain is Cytoplasmic; that stretch reads YGDMLSNVGA…AHLVQQRLEA (274 aa). Residues 468 to 702 enclose the ABC transporter domain; that stretch reads VEFQDVSFSY…YAHLVQQRLE (235 aa). ATP is bound at residue 503-510; the sequence is GPNGSGKS.

Belongs to the ABC transporter superfamily. ABCB family. MHC peptide exporter (TC 3.A.1.209) subfamily. As to quaternary structure, heterodimer of TAP1 and TAP2 (TAP1-TAP2). A component of the peptide loading complex (PLC), interacts via TAPBP with MHCI heterodimer; this interaction mediates peptide-MHCI assembly. The cofactor is Mg(2+).

The protein resides in the endoplasmic reticulum membrane. It catalyses the reaction a peptide antigen(in) + ATP + H2O = a peptide antigen(out) + ADP + phosphate + H(+). In terms of biological role, ABC transporter associated with antigen processing. In complex with TAP1 mediates unidirectional translocation of peptide antigens from cytosol to endoplasmic reticulum (ER) for loading onto MHC class I (MHCI) molecules. Uses the chemical energy of ATP to export peptides against the concentration gradient. During the transport cycle alternates between 'inward-facing' state with peptide binding site facing the cytosol to 'outward-facing' state with peptide binding site facing the ER lumen. Peptide antigen binding to ATP-loaded TAP1-TAP2 induces a switch to hydrolysis-competent 'outward-facing' conformation ready for peptide loading onto nascent MHCI molecules. Subsequently ATP hydrolysis resets the transporter to the 'inward facing' state for a new cycle. As a component of the peptide loading complex (PLC), acts as a molecular scaffold essential for peptide-MHCI assembly and antigen presentation. In Rattus norvegicus (Rat), this protein is Antigen peptide transporter 2 (Tap2).